The sequence spans 219 residues: Interleukin-12 subunit alpha (219 aa).

The first 22 residues, 1–22 (MCPARSLLLVATLVLLDHLSLA), serve as a signal peptide directing secretion. Intrachain disulfides connect Cys-37–Cys-110, Cys-64–Cys-196, and Cys-85–Cys-123. N-linked (GlcNAc...) asparagine glycosylation is found at Asn-93 and Asn-107.

The protein belongs to the IL-6 superfamily. In terms of assembly, heterodimer with IL12B; disulfide-linked. This heterodimer is known as interleukin IL-12. Heterodimer with EBI3/IL27B; not disulfide-linked. This heterodimer is known as interleukin IL-35. Interacts with NBR1; this interaction promotes IL-12 secretion.

The protein localises to the secreted. Functionally, heterodimerizes with IL12B to form the IL-12 cytokine or with EBI3/IL27B to form the IL-35 cytokine. IL-12 is primarily produced by professional antigen-presenting cells (APCs) such as B-cells and dendritic cells (DCs) as well as macrophages and granulocytes and regulates T-cell and natural killer-cell responses, induces the production of interferon-gamma (IFN-gamma), favors the differentiation of T-helper 1 (Th1) cells and is an important link between innate resistance and adaptive immunity. Mechanistically, exerts its biological effects through a receptor composed of IL12R1 and IL12R2 subunits. Binding to the receptor results in the rapid tyrosine phosphorylation of a number of cellular substrates including the JAK family kinases TYK2 and JAK2. In turn, recruited STAT4 gets phosphorylated and translocates to the nucleus where it regulates cytokine/growth factor responsive genes. As part of IL-35, plays essential roles in maintaining the immune homeostasis of the liver microenvironment and also functions as an immune-suppressive cytokine. Mediates biological events through unconventional receptors composed of IL12RB2 and gp130/IL6ST heterodimers or homodimers. Signaling requires the transcription factors STAT1 and STAT4, which form a unique heterodimer that binds to distinct DNA sites. The protein is Interleukin-12 subunit alpha (IL12A) of Homo sapiens (Human).